A 272-amino-acid polypeptide reads, in one-letter code: HMP-PP phosphatase (272 aa).

Catalysis depends on aspartate 8, which acts as the Nucleophile. Mg(2+) contacts are provided by aspartate 8, aspartate 10, and aspartate 212.

The protein belongs to the HAD-like hydrolase superfamily. Cof family. Mg(2+) serves as cofactor.

The enzyme catalyses 4-amino-2-methyl-5-(diphosphooxymethyl)pyrimidine + H2O = 4-amino-2-methyl-5-(phosphooxymethyl)pyrimidine + phosphate + H(+). Its function is as follows. Catalyzes the hydrolysis of 4-amino-2-methyl-5-hydroxymethylpyrimidine pyrophosphate (HMP-PP) to 4-amino-2-methyl-5-hydroxymethylpyrimidine phosphate (HMP-P). In Escherichia coli O157:H7, this protein is HMP-PP phosphatase.